Reading from the N-terminus, the 864-residue chain is Translation initiation factor IF-2 (864 aa).

The segment covering 140–171 has biased composition (basic and acidic residues); the sequence is DSRSLNTKKENKLKISNKDEQNKKFNQHRESN. Residues 140–179 form a disordered region; it reads DSRSLNTKKENKLKISNKDEQNKKFNQHRESNSFDLNHKK. The tr-type G domain occupies 364–533; sequence IRAPVVTIMG…LLQAEMLELK (170 aa). The tract at residues 373-380 is G1; it reads GHVDHGKT. 373–380 contributes to the GTP binding site; it reads GHVDHGKT. Positions 398-402 are G2; the sequence is GITQN. Positions 419–422 are G3; that stretch reads DTPG. GTP is bound by residues 419 to 423 and 473 to 476; these read DTPGH and NKID. A G4 region spans residues 473–476; it reads NKID. The tract at residues 509 to 511 is G5; that stretch reads SAK.

Belongs to the TRAFAC class translation factor GTPase superfamily. Classic translation factor GTPase family. IF-2 subfamily.

The protein localises to the cytoplasm. One of the essential components for the initiation of protein synthesis. Protects formylmethionyl-tRNA from spontaneous hydrolysis and promotes its binding to the 30S ribosomal subunits. Also involved in the hydrolysis of GTP during the formation of the 70S ribosomal complex. This is Translation initiation factor IF-2 from Buchnera aphidicola subsp. Acyrthosiphon pisum (strain 5A).